The chain runs to 1102 residues: Carbamoyl phosphate synthase large chain (1102 aa).

The segment at 1–402 (MPKRTDLKSV…ALQKALRSLE (402 aa)) is carboxyphosphate synthetic domain. Residues R129, R169, G175, G176, E208, I210, E215, G241, V242, H243, Q285, and E299 each coordinate ATP. Positions 133–328 (KGVVERCGAE…IAKIATKLSL (196 aa)) constitute an ATP-grasp 1 domain. Mg(2+)-binding residues include Q285, E299, and N301. Residues Q285, E299, and N301 each contribute to the Mn(2+) site. The interval 403-546 (QKGSQLDFSS…YHYSSYDEED (144 aa)) is oligomerization domain. A carbamoyl phosphate synthetic domain region spans residues 547–950 (EVGLHAKPSV…AFAKSQAAAN (404 aa)). Residues 677–868 (ARVLDEAGLT…MAKAAALIGT (192 aa)) form the ATP-grasp 2 domain. ATP-binding residues include R713, R752, L754, E759, G784, I785, H786, S787, Q827, and E839. Mg(2+)-binding residues include Q827, E839, and N841. Q827, E839, and N841 together coordinate Mn(2+). The MGS-like domain maps to 951–1096 (NALPTEGKIF…QEHAANLSAA (146 aa)). An allosteric domain region spans residues 951-1102 (NALPTEGKIF…LSAAMEAANA (152 aa)).

Belongs to the CarB family. Composed of two chains; the small (or glutamine) chain promotes the hydrolysis of glutamine to ammonia, which is used by the large (or ammonia) chain to synthesize carbamoyl phosphate. Tetramer of heterodimers (alpha,beta)4. It depends on Mg(2+) as a cofactor. Requires Mn(2+) as cofactor.

The enzyme catalyses hydrogencarbonate + L-glutamine + 2 ATP + H2O = carbamoyl phosphate + L-glutamate + 2 ADP + phosphate + 2 H(+). It catalyses the reaction hydrogencarbonate + NH4(+) + 2 ATP = carbamoyl phosphate + 2 ADP + phosphate + 2 H(+). It functions in the pathway amino-acid biosynthesis; L-arginine biosynthesis; carbamoyl phosphate from bicarbonate: step 1/1. Its pathway is pyrimidine metabolism; UMP biosynthesis via de novo pathway; (S)-dihydroorotate from bicarbonate: step 1/3. In terms of biological role, large subunit of the glutamine-dependent carbamoyl phosphate synthetase (CPSase). CPSase catalyzes the formation of carbamoyl phosphate from the ammonia moiety of glutamine, carbonate, and phosphate donated by ATP, constituting the first step of 2 biosynthetic pathways, one leading to arginine and/or urea and the other to pyrimidine nucleotides. The large subunit (synthetase) binds the substrates ammonia (free or transferred from glutamine from the small subunit), hydrogencarbonate and ATP and carries out an ATP-coupled ligase reaction, activating hydrogencarbonate by forming carboxy phosphate which reacts with ammonia to form carbamoyl phosphate. The sequence is that of Carbamoyl phosphate synthase large chain from Paenarthrobacter aurescens (strain TC1).